Reading from the N-terminus, the 443-residue chain is MSDPRPNTLSPLATLTPPSSSRTWQTAPHPTLPIVATACSDRSVRVYSLTSFTLLHSITGGHKRSVRAVSWKPHTQGQSVLATGSFDSSAGIWRREEQGGNEDDFTNRRVGGAEDEDGRDDDDEDEYQFSCILDGHESEIKSLSWSPTGQYLATCSRDKSVWIWEELEDDNFETVAVLQEHDGDVKCVAWHPEEDLLASASYDDSVRLYREDSDDWVQVACIAGKEGHGMTVWWVEFEGSGISGKDFRVQRDGLSEEQTQHVDSMERSGPRLATCSDDRTVRIWRRKPRERAENASSNTGIPSIIRSAAIDEDWYQDAILPQVHERAIYSVSWSRTTGLIASAGSDGKIIIYKERWRKQTPNGVDTDNMQIDGSEPASLTEWFVLAELFSAHSVFEINHVTWAKRADKDKRYDGEEVIVSTGDEGEVKVWTLDEVADPPQRDA.

Disordered stretches follow at residues Met-1 to Ala-27 and Arg-95 to Glu-124. Low complexity predominate over residues Thr-8–Ser-21. WD repeat units lie at residues Thr-14–Ser-57 and Gly-61–Asp-103. Positions Ala-113–Glu-124 are enriched in acidic residues. WD repeat units follow at residues Gly-135–Thr-174, Glu-180–Val-219, Cys-221–Arg-248, Ser-255–Asn-294, Val-323–Asn-362, and Ala-391–Gln-440.

It belongs to the WD repeat CIA1 family.

In terms of biological role, essential component of the cytosolic iron-sulfur (Fe/S) protein assembly machinery. Required for the maturation of extramitochondrial Fe/S proteins. This is Probable cytosolic iron-sulfur protein assembly protein 1 from Phaeosphaeria nodorum (strain SN15 / ATCC MYA-4574 / FGSC 10173) (Glume blotch fungus).